A 238-amino-acid chain; its full sequence is Sugar fermentation stimulation protein homolog (238 aa).

The protein belongs to the SfsA family.

The protein is Sugar fermentation stimulation protein homolog of Klebsiella pneumoniae subsp. pneumoniae (strain ATCC 700721 / MGH 78578).